We begin with the raw amino-acid sequence, 135 residues long: UPF0299 membrane protein YPK_2559 (135 aa).

3 helical membrane passes run 30-50, 66-86, and 93-113; these read LLLPIVIPGSIIGMLILFVLL, LLIRYMALLFVPIGVGVMQYY, and FGPIVVSCFISTLIVMLVVAY.

Belongs to the UPF0299 family.

It is found in the cell inner membrane. This Yersinia pseudotuberculosis serotype O:3 (strain YPIII) protein is UPF0299 membrane protein YPK_2559.